The sequence spans 221 residues: MKFFATIAALVVAAVAAPVAEADAEASSPMLIERAGPGGINYVQNYNGNLGQFTYNENAGTYSMYWTNGVSGDFVVGLGWSTGAARSITYSSSYTASGGSYLSVYGWINSPQAEYYIVESYGSYNPCGAGQSGVTQLGTVVSDGATYTVCTDERVNEPSITGTSTFKQYWSVRQTKRTSGTVTTGNHFAYWAKYGFGNSYNFQVMAVEAFSGTGSASVTVS.

A signal peptide spans Met-1–Ala-22. Positions Pro-29–Ser-221 constitute a GH11 domain. Glu-114 functions as the Nucleophile in the catalytic mechanism. Glu-208 acts as the Proton donor in catalysis.

It belongs to the glycosyl hydrolase 11 (cellulase G) family.

It is found in the secreted. It carries out the reaction Endohydrolysis of (1-&gt;4)-beta-D-xylosidic linkages in xylans.. It functions in the pathway glycan degradation; xylan degradation. Functionally, endo-1,4-beta-xylanase involved in the hydrolysis of xylan, a major structural heterogeneous polysaccharide found in plant biomass representing the second most abundant polysaccharide in the biosphere, after cellulose. Hydrolyzes xylans from oat spelt and birchwood at similar rates, but it has no detectable activity toward Avicel or carboxymethyl cellulose. The chain is Endo-1,4-beta-xylanase 1 (xynI) from Aureobasidium pullulans (Black yeast).